A 104-amino-acid chain; its full sequence is Pyrimidine/purine nucleoside phosphorylase (104 aa).

It belongs to the nucleoside phosphorylase PpnP family.

The catalysed reaction is a purine D-ribonucleoside + phosphate = a purine nucleobase + alpha-D-ribose 1-phosphate. It carries out the reaction adenosine + phosphate = alpha-D-ribose 1-phosphate + adenine. The enzyme catalyses cytidine + phosphate = cytosine + alpha-D-ribose 1-phosphate. It catalyses the reaction guanosine + phosphate = alpha-D-ribose 1-phosphate + guanine. The catalysed reaction is inosine + phosphate = alpha-D-ribose 1-phosphate + hypoxanthine. It carries out the reaction thymidine + phosphate = 2-deoxy-alpha-D-ribose 1-phosphate + thymine. The enzyme catalyses uridine + phosphate = alpha-D-ribose 1-phosphate + uracil. It catalyses the reaction xanthosine + phosphate = alpha-D-ribose 1-phosphate + xanthine. Catalyzes the phosphorolysis of diverse nucleosides, yielding D-ribose 1-phosphate and the respective free bases. Can use uridine, adenosine, guanosine, cytidine, thymidine, inosine and xanthosine as substrates. Also catalyzes the reverse reactions. In Geobacter metallireducens (strain ATCC 53774 / DSM 7210 / GS-15), this protein is Pyrimidine/purine nucleoside phosphorylase.